The primary structure comprises 220 residues: MAYRDQPLGELALSIPRASALFRKYDMDYCCGGKQTLARAAARKELDVDVIEAELAKLAEQPIEKDWRSAPLAEIIDHIIVRYHDRHREQLPELILQATKVERVHADKPSVPKGLTKYLTMLHEELSSHMMKEEQILFPMIKQGMGSQAMGPISVMESEHDEAGELLEVIKHTTNNVTPPPEACTTWKAMYNGINELIDDLMEHISLENNILFPRALAGE.

This sequence belongs to the RIC family. YtfE subfamily. As to quaternary structure, homodimer.

The protein resides in the cytoplasm. Di-iron-containing protein involved in the repair of iron-sulfur clusters damaged by oxidative and nitrosative stress conditions. The polypeptide is Iron-sulfur cluster repair protein YtfE (Escherichia coli O81 (strain ED1a)).